The following is a 122-amino-acid chain: MDPDAVAKAFVEHYYSTFDANRPGLVSLYQEGSMLTFEGQKIQGSQNIVAKLTGLPFQQCKHNITTVDCQPSGPAGGMLVFVSGNLQLAGEQHALKFSQMFHLISNQGNYYVFNDIFRLNYA.

M1 is modified (N-acetylmethionine). One can recognise an NTF2 domain in the interval 6–119 (VAKAFVEHYY…YYVFNDIFRL (114 aa)).

As to quaternary structure, interacts with RAN1. Expressed in roots, stems, leaves and flowers, and, at low levels, in siliques.

The protein localises to the cytoplasm. It is found in the nucleus. The protein resides in the nucleus envelope. In terms of biological role, facilitates protein transport into the nucleus. Interacts with various nucleoporins and with Ran-GDP. Could be part of a multicomponent system of cytosolic factors that assemble at the pore complex during nuclear import. In Arabidopsis thaliana (Mouse-ear cress), this protein is Nuclear transport factor 2A.